The following is a 664-amino-acid chain: Pentatricopeptide repeat-containing protein At1g10910, chloroplastic (664 aa).

The N-terminal 72 residues, methionine 1 to arginine 72, are a transit peptide targeting the chloroplast. PPR repeat units lie at residues asparagine 165–proline 199, aspartate 200–methionine 235, aspartate 236–proline 270, asparagine 271–proline 305, asparagine 306–glutamate 340, asparagine 341–serine 375, aspartate 376–threonine 406, aspartate 411–proline 445, and aspartate 446–leucine 480.

It belongs to the PPR family. P subfamily.

The protein resides in the plastid. The protein localises to the chloroplast. This Arabidopsis thaliana (Mouse-ear cress) protein is Pentatricopeptide repeat-containing protein At1g10910, chloroplastic.